A 371-amino-acid chain; its full sequence is Mannonate dehydratase (371 aa).

The protein belongs to the mannonate dehydratase family. Requires Fe(2+) as cofactor. The cofactor is Mn(2+).

It carries out the reaction D-mannonate = 2-dehydro-3-deoxy-D-gluconate + H2O. The protein operates within carbohydrate metabolism; pentose and glucuronate interconversion. Its function is as follows. Catalyzes the dehydration of D-mannonate. The protein is Mannonate dehydratase of Geobacillus thermodenitrificans (strain NG80-2).